The primary structure comprises 66 residues: Photosystem II reaction center protein J (66 aa).

Residues 37-57 (LWLVATAGGMAVIFVVGLFFY) form a helical membrane-spanning segment.

This sequence belongs to the PsbJ family. PSII is composed of 1 copy each of membrane proteins PsbA, PsbB, PsbC, PsbD, PsbE, PsbF, PsbH, PsbI, PsbJ, PsbK, PsbL, PsbM, PsbT, PsbX, PsbY, PsbZ, Psb30/Ycf12, peripheral proteins PsbO, CyanoQ (PsbQ), PsbU, PsbV and a large number of cofactors. It forms dimeric complexes.

It localises to the cellular thylakoid membrane. Functionally, one of the components of the core complex of photosystem II (PSII). PSII is a light-driven water:plastoquinone oxidoreductase that uses light energy to abstract electrons from H(2)O, generating O(2) and a proton gradient subsequently used for ATP formation. It consists of a core antenna complex that captures photons, and an electron transfer chain that converts photonic excitation into a charge separation. In Synechococcus sp. (strain CC9311), this protein is Photosystem II reaction center protein J.